The following is a 358-amino-acid chain: Phosphoserine aminotransferase (358 aa).

Arginine 41 lines the L-glutamate pocket. Pyridoxal 5'-phosphate is bound by residues 75 to 76 (AS), tryptophan 100, threonine 148, aspartate 167, and glutamine 190. Lysine 191 is subject to N6-(pyridoxal phosphate)lysine. 233–234 (NT) lines the pyridoxal 5'-phosphate pocket.

Belongs to the class-V pyridoxal-phosphate-dependent aminotransferase family. SerC subfamily. As to quaternary structure, homodimer. Requires pyridoxal 5'-phosphate as cofactor.

It is found in the cytoplasm. The catalysed reaction is O-phospho-L-serine + 2-oxoglutarate = 3-phosphooxypyruvate + L-glutamate. The enzyme catalyses 4-(phosphooxy)-L-threonine + 2-oxoglutarate = (R)-3-hydroxy-2-oxo-4-phosphooxybutanoate + L-glutamate. The protein operates within amino-acid biosynthesis; L-serine biosynthesis; L-serine from 3-phospho-D-glycerate: step 2/3. It functions in the pathway cofactor biosynthesis; pyridoxine 5'-phosphate biosynthesis; pyridoxine 5'-phosphate from D-erythrose 4-phosphate: step 3/5. Its function is as follows. Catalyzes the reversible conversion of 3-phosphohydroxypyruvate to phosphoserine and of 3-hydroxy-2-oxo-4-phosphonooxybutanoate to phosphohydroxythreonine. The sequence is that of Phosphoserine aminotransferase from Campylobacter lari (strain RM2100 / D67 / ATCC BAA-1060).